A 529-amino-acid chain; its full sequence is Beta-hexosaminidase subunit alpha (529 aa).

The N-terminal stretch at 1-22 (MAGSTLRFSLLLAAAFAGRATA) is a signal peptide. Positions 23-88 (LWPWPQYIQT…RFPHPIEKRH (66 aa)) are excised as a propeptide. Cys58 and Cys104 are joined by a disulfide. 3 N-linked (GlcNAc...) asparagine glycosylation sites follow: Asn115, Asn157, and Asn295. Cys277 and Cys328 are oxidised to a cystine. The Proton donor role is filled by Glu323. The tract at residues 423–424 (NH) is critical for hydrolysis GM2 gangliosides. Residues Cys505 and Cys522 are joined by a disulfide bond.

It belongs to the glycosyl hydrolase 20 family. As to quaternary structure, there are 3 beta-hexosaminidase isozymes: isozyme A (hexosaminidase A) is a heterodimer composed of one subunit alpha and one subunit beta (chain A and B); isozyme B (hexosaminidase B) is a homodimer of two beta subunits (two chains A and B); isozyme S (hexosaminidase S) is a homodimer of two alpha subunits. The composition of the dimer (isozyme A versus isozyme S) has a significant effect on the substrate specificity of the alpha subunit active site.

The protein resides in the lysosome. It carries out the reaction Hydrolysis of terminal non-reducing N-acetyl-D-hexosamine residues in N-acetyl-beta-D-hexosaminides.. The enzyme catalyses N-acetyl-beta-D-galactosaminyl-(1-&gt;4)-beta-D-3-sulfogalactosyl-(1-&gt;4)-beta-D-glucosyl-(1&lt;-&gt;1')-ceramide + H2O = a beta-D-3-sulfogalactosyl-(1-&gt;4)-beta-D-glucosyl-(1&lt;-&gt;1')-ceramide + N-acetyl-beta-D-galactosamine. It catalyses the reaction a ganglioside GM2 (d18:1(4E)) + H2O = a ganglioside GM3 (d18:1(4E)) + N-acetyl-beta-D-galactosamine. The catalysed reaction is a ganglioside GM2 + H2O = a ganglioside GM3 + N-acetyl-beta-D-galactosamine. It carries out the reaction beta-D-GalNAc-(1-&gt;4)-alpha-L-IdoA-(1-&gt;3)-beta-D-GalNAc-4-sulfate-(1-&gt;4)-alpha-L-IdoA-(1-&gt;3)-D-GalNAc-4-sulfate + H2O = alpha-L-IdoA-(1-&gt;3)-beta-D-GalNAc-4-sulfate-(1-&gt;4)-alpha-L-IdoA-(1-&gt;3)-D-GalNAc-4-sulfate + N-acetyl-D-galactosamine. The enzyme catalyses N-acetyl-beta-D-6-sulfogalactosaminyl-(1-&gt;4)-alpha-L-iduronyl-(1-&gt;3)-N-acetyl-D-6-sulfogalactosamine + H2O = alpha-L-iduronyl-(1-&gt;3)-N-acetyl-D-6-sulfogalactosamine + N-acetyl-D-6-sulfogalactosamine. With respect to regulation, addition of GM2A stimulates the hydrolysis of sulfated glycosphingolipid SM2 and the ganglioside GM2. Functionally, hydrolyzes the non-reducing end N-acetyl-D-hexosamine and/or sulfated N-acetyl-D-hexosamine of glycoconjugates, such as the oligosaccharide moieties from proteins and neutral glycolipids, or from certain mucopolysaccharides. The isozyme S is as active as the isozyme A on the anionic bis-sulfated glycans, the chondroitin-6-sulfate trisaccharide (C6S-3), and the dermatan sulfate pentasaccharide, and the sulfated glycosphingolipid SM2. The isozyme B does not hydrolyze each of these substrates, however hydrolyzes efficiently neutral oligosaccharide. Only the isozyme A is responsible for the degradation of GM2 gangliosides in the presence of GM2A. This is Beta-hexosaminidase subunit alpha from Bos taurus (Bovine).